The primary structure comprises 287 residues: Movement protein (287 aa).

Belongs to the nucleorhabdovirus type-1 movement protein family.

In terms of biological role, transports viral genome to neighboring plant cells directly through plasmosdesmata, without any budding. The movement protein allows efficient cell to cell propagation, by bypassing the host cell wall barrier. The protein is Movement protein (3) of Colocasia esculenta (Wild taro).